Reading from the N-terminus, the 338-residue chain is Nicotinate-nucleotide--dimethylbenzimidazole phosphoribosyltransferase (338 aa).

The Proton acceptor role is filled by glutamate 305.

It belongs to the CobT family.

It catalyses the reaction 5,6-dimethylbenzimidazole + nicotinate beta-D-ribonucleotide = alpha-ribazole 5'-phosphate + nicotinate + H(+). Its pathway is nucleoside biosynthesis; alpha-ribazole biosynthesis; alpha-ribazole from 5,6-dimethylbenzimidazole: step 1/2. Functionally, catalyzes the synthesis of alpha-ribazole-5'-phosphate from nicotinate mononucleotide (NAMN) and 5,6-dimethylbenzimidazole (DMB). The protein is Nicotinate-nucleotide--dimethylbenzimidazole phosphoribosyltransferase of Novosphingobium aromaticivorans (strain ATCC 700278 / DSM 12444 / CCUG 56034 / CIP 105152 / NBRC 16084 / F199).